A 375-amino-acid polypeptide reads, in one-letter code: o-succinylbenzoate synthase (375 aa).

K166 (proton donor) is an active-site residue. Mg(2+) is bound by residues D191, E216, and D241. The Proton acceptor role is filled by K265.

This sequence belongs to the mandelate racemase/muconate lactonizing enzyme family. MenC type 2 subfamily. In terms of assembly, homotetramer. Requires a divalent metal cation as cofactor.

It carries out the reaction (1R,6R)-6-hydroxy-2-succinyl-cyclohexa-2,4-diene-1-carboxylate = 2-succinylbenzoate + H2O. The catalysed reaction is N-acetyl-D-methionine = N-acetyl-L-methionine. The enzyme catalyses N-acetyl-D-phenylalanine = N-acetyl-L-phenylalanine. It participates in quinol/quinone metabolism; 1,4-dihydroxy-2-naphthoate biosynthesis; 1,4-dihydroxy-2-naphthoate from chorismate: step 4/7. Its pathway is quinol/quinone metabolism; menaquinone biosynthesis. Converts 2-succinyl-6-hydroxy-2,4-cyclohexadiene-1-carboxylate (SHCHC) to 2-succinylbenzoate (OSB). Also acts as a N-succinylamino acid racemase (NSAR) that catalyzes the racemization of various N-succinylamino acids, including N-succinyl-alanine and N-succinyl-phenylalanine. Can catalyze the racemization of a broad range of N-acylamino acids, including N-acetyl-methionine, N-acetyl-phenylalanine, N-carbamoyl-methionine, N-formyl-D-methionine, N-formyl-D-norleucine and N-carbamoyl-D-norleucine. May be a bifunctional enzyme involved in menaquinone biosynthesis and in an irreversible pathway for the conversion of D- to L-amino acids, thereby facilitating the survival and/or growth of the organism. This Geobacillus kaustophilus protein is o-succinylbenzoate synthase.